The primary structure comprises 404 residues: Major outer membrane porin (404 aa).

Residues 1–22 (MKKLLKSVLAFAVLGSASSLHA) form the signal peptide. A disordered region spans residues 85–110 (GPVPTTTDTDAAADITTSTPRENPAY). Positions 89–103 (TTTDTDAAADITTST) are enriched in low complexity.

Belongs to the chlamydial porin (CP) (TC 1.B.2) family. As to quaternary structure, part of a disulfide cross-linked outer membrane complex (COMC) composed of the major outer membrane porin (MOMP), the small cysteine-rich protein (OmcA) and the large cysteine-rich periplasmic protein (OmcB).

The protein resides in the cell outer membrane. In elementary bodies (EBs, the infectious stage, which is able to survive outside the host cell) provides the structural integrity of the outer envelope through disulfide cross-links with the small cysteine-rich protein and the large cysteine-rich periplasmic protein. It has been described in publications as the Sarkosyl-insoluble COMC (Chlamydia outer membrane complex), and serves as the functional equivalent of peptidoglycan. Functionally, permits diffusion of specific solutes through the outer membrane. The polypeptide is Major outer membrane porin (ompA) (Chlamydia muridarum).